The sequence spans 304 residues: Putative dihydroorotate dehydrogenase A (fumarate) (304 aa).

Residues Ser22 and 46–47 (KG) each bind FMN. Residues Lys46 and 70-74 (NSVGL) contribute to the substrate site. FMN is bound by residues Asn100 and Asn128. A substrate-binding site is contributed by Asn128. The active-site Nucleophile is Cys131. FMN contacts are provided by Lys166 and Val192. Residue 193-194 (NT) participates in substrate binding. FMN-binding positions include Gly218, 244-245 (GG), and 266-267 (GT).

This sequence belongs to the dihydroorotate dehydrogenase family. Type 1 subfamily. In terms of assembly, homodimer. FMN serves as cofactor.

The protein resides in the cytoplasm. The catalysed reaction is (S)-dihydroorotate + fumarate = orotate + succinate. The protein operates within pyrimidine metabolism; UMP biosynthesis via de novo pathway. Catalyzes the conversion of dihydroorotate to orotate with fumarate as the electron acceptor. The sequence is that of Putative dihydroorotate dehydrogenase A (fumarate) (pyrD) from Solibacter usitatus (strain Ellin6076).